The following is a 186-amino-acid chain: Ribosome rescue factor SmrB (186 aa).

In terms of domain architecture, Smr spans 99–174 (IDLHGLTQHQ…SDAAIIVIIE (76 aa)).

It belongs to the SmrB family. As to quaternary structure, associates with collided ribosomes, but not with correctly translating polysomes.

Functionally, acts as a ribosome collision sensor. Detects stalled/collided disomes (pairs of ribosomes where the leading ribosome is stalled and a second ribosome has collided with it) and endonucleolytically cleaves mRNA at the 5' boundary of the stalled ribosome. Stalled/collided disomes form a new interface (primarily via the 30S subunits) that binds SmrB. Cleaved mRNA becomes available for tmRNA ligation, leading to ribosomal subunit dissociation and rescue of stalled ribosomes. The chain is Ribosome rescue factor SmrB from Buchnera aphidicola subsp. Acyrthosiphon pisum (strain Tuc7).